A 233-amino-acid chain; its full sequence is Adenylyl cyclase-associated protein 1 (233 aa).

Tyr-14 carries the post-translational modification Phosphotyrosine. Residue Ser-17 is modified to Phosphoserine. Disordered stretches follow at residues 43–71 (VDKXGPVAKELSGLPSGPSAGSGPPPSAL) and 91–129 (DEKTHKNPADKAQSGPVRXGPKPFSASKPGISPSPKPVT). Low complexity predominate over residues 53 to 64 (LSGLPSGPSAGS). Lys-101 bears the N6-methyllysine mark. Residues Ser-104, Ser-115, Ser-122, and Ser-124 each carry the phosphoserine modification. Lys-151 is covalently cross-linked (Glycyl lysine isopeptide (Lys-Gly) (interchain with G-Cter in SUMO1)). The C-CAP/cofactor C-like domain occupies 173-221 (VPXISINKXDGRHIYLSKNSLDCEIVSAKSSEMNVLIPTEGGDFNEFPV).

Belongs to the CAP family. As to quaternary structure, homodimer. Binds actin monomers.

The protein resides in the cell membrane. Its function is as follows. Directly regulates filament dynamics and has been implicated in a number of complex developmental and morphological processes, including mRNA localization and the establishment of cell polarity. The chain is Adenylyl cyclase-associated protein 1 (CAP1) from Sus scrofa (Pig).